Here is a 2298-residue protein sequence, read N- to C-terminus: MKGHQFKSWIFELREIVREIKNSHYFLDSWTQFNSVGSFIHIFFHQERFRKLLDPRILSILLSRNSQGSTSNRYFTIKSVVLFVVAALLYRINNRNMVESKNLYLKGLLPIPMNSIGPRNDTSEESFGSSNINRLIVSLLYLTKGKKISESCFRDPKESTWVLPITQKCIMPESNWSSRWWRNWIGKKRDFCCKISNETVAGIDISFKEKDIKYLEFLFVYYMDDPIRKGHDWELFDRLSPSKRRNIINLNSGQLFEILVKDWICYLMFAFREKIPIEVEGFFKQQGAGSTIQSNDIEHVSHLFSRNKWAISLQNCAQFHMWQFHQDLFVSWGKNPHESDFLRKISRENWIWLDNVWLVNKDRFFSKVRNVSSNIQYDSTRSSFVQVTDSSQLKGSSDQFIDHFDSISNEDSEYHYHTLINQREIQQLKERSILWDPSFIQTEGREIESDRFPKYLSGYSSMPRLFTEREKRMNNHLLPEESEEFIGNPTRPIRSFFSDRWSELHLGSNPTERSTRDQKLLKKEQDVSFVPSRRSENKEIVNIFKIIAYLQNTVSIHPISSDLGCDMVPKDELDMDSSNKISFLNKNPFFDLFHLFHERKRGGYTLRHDFESEERFQEMADLFTLSITEPDLVYHKGFAFSIDSYGLDQRQFLKEVFNSRDESKKKSLLVLPPIFYEENESFYRRIRQNWVRISCGNDLEDPKQKRVVFASNNIMEAGNQYRLIRNLIQIQFQYSPYGYIRNVLNRFFLMKRPDRNFEYGIQRDQIGNDTLNHRTIMKDTINQHLSNLKKSQKKWFDPLIFLSRTERSINRDPNAYRYKWSNGSKNFQEHLEHFVSERKSLFQVVFDRLCINQYSIDWSEVIDKKDLSKSLRFFLSKLLRFFLSKLLLFLSKLLLFLSNSLPFFFVSFENIPIHRSEIHIYELKGPNDQLCNQLLESIGLQIVHLKKLKPFLLDDHNTSQKSKFLINGGTISPFLFNKIPKWMIDSFHTRKNRRKSFDNTDSYFSMVSHDQDNWLNPLKPFQRSSLISSFSKANRLRFLNNPHHFCFYCNKRFPFYVEKARLNNYDFTYGQFLTILFIRNKIFSSCGGKKKHAFLERDTISPSPIESQVSNIFISNDFPQSGDERYNLYKSFHFPIRSDPLVRRAIYSIADISGTPLIEGQRVNFERTYCQTLSDMNLSDSEEKSLHQYLNFNSNMGLIHTPCSEKYLPSEKRKKWSLCLKKCVDKGQMDRTFQRDSAFSTLSKWNLFQTYMPWFFTSTGYKYLNLIFLDTFSDLLRILSSSPKFVSIFHDIMHGLDISWRILQKKLCLPQRNLISEISSKSLHNLLLSEEMIHRNNESSLISTHLRSPNVREVLYSILFLLLVAGYIVRTHLLFVSRAYSELQTEFEKIKSLMIPSYMIELRKLLDRYPTSELNSFWLKNLFLVALEQLGDCLEEIRGSGGNMLWGGDPAYGVKSIRSKKKDLNINFIDIIDLISIIPNPINRITFSRNTRHLSHTSKEIYSLIRKRKNVSGDWIDDKIESWVANSDSIDDKEREFLVQFSTLRAEKRIDQILLSLTHSDHLSKNDSGYQMIEQPGTIYLRYLVDIHKKYLMNYEFNTSCLAERRIFLAHYQTITYSQTSCGANSFHFPSHGKPFSLRLALSPSRSILVIGSIGTGRSYLVKYLATTSYVPFITVFLNKFLDNKPKGFFIDDIDIDDSDDIDASNDIDRELDTELELLTMMNALTMDMMSEIDRFYITLQFELAKAMSPCIIWIPNIHDLDVNESNYLALGLLVNSLSRDCERCSTRNILVIASTHIPQKVDPALIAPNKLNTCIKIRRLLIPQQRKHFFTLSYTRGFHLEKKMFHTNGFESITMGSSARDLVALTNEALSISITQKKSIIDTNTIRSALHRQTWDLRSQVRSVQDHGILFYQIGRAVAQNVLISNCPIDPISIYMKKKSCNEGDSYLYKWYFELGTSMKKFTILLYLLSCSAGSVAQDLWSLPGPDEKNRITSYGFVENDSDLVHGLLEVQGALVGSSRTEKDCSQFDNDRVTLLFRSEPRNPLYMMQNGSCSIVDQRFLYEKYESEFEEGEGEGVLDPQQIEEDLFNHIVWAPRIWRPRGFLFDCIERPNELGFPYLAGSFRGKRIIYDEKYELQENDSEFLQSGTMQYQRRDRSSKEQGFFRISQFIWDPADPLFFLFKDQPFVSVFSHREFFADEEMSKGLFTSQTDPPTSIYKRWFIKNTQEKHFELLIQRQRWLRTNSSLSNGFFRSNTLSESYQYLSNLFLSNGTLLDRMTKTLLKKRWLFPDEMKIGFM.

1652 to 1659 (GSIGTGRS) contacts ATP.

This sequence belongs to the Ycf2 family.

It is found in the plastid. Its subcellular location is the chloroplast stroma. In terms of biological role, probable ATPase of unknown function. Its presence in a non-photosynthetic plant (Epifagus virginiana) and experiments in tobacco indicate that it has an essential function which is probably not related to photosynthesis. This chain is Protein Ycf2, found in Aethionema cordifolium (Lebanon stonecress).